A 502-amino-acid polypeptide reads, in one-letter code: UPF0371 protein CLD_0424 (502 aa).

It belongs to the UPF0371 family.

The sequence is that of UPF0371 protein CLD_0424 from Clostridium botulinum (strain Okra / Type B1).